The chain runs to 417 residues: DNA primase small subunit (417 aa).

Met-1 carries the post-translational modification N-acetylmethionine. Residues Glu-44, Asp-109, and Asp-111 contribute to the active site. Residues Asp-109 and Asp-111 each contribute to the Mg(2+) site. The Mn(2+) site is built by Asp-109 and Asp-111. Position 109–111 (109–111 (DID)) interacts with a ribonucleoside 5'-triphosphate. The Zn(2+) site is built by Cys-121, Cys-122, Cys-128, and Cys-131. Positions 121–131 (CCSSADICSKC) match the Zinc knuckle motif motif. Position 160 to 166 (160 to 166 (SGRRGVH)) interacts with a ribonucleoside 5'-triphosphate. A Mg(2+)-binding site is contributed by Asp-305. Mn(2+) is bound at residue Asp-305. A ribonucleoside 5'-triphosphate contacts are provided by residues 314–317 (HLLK) and His-323.

This sequence belongs to the eukaryotic-type primase small subunit family. Heterodimer of a catalytic subunit PRIM1 and a regulatory subunit PRIM2, also known as the DNA primase complex. Interacts with PRIM2/p58 (via C-terminus). Component of the alpha DNA polymerase complex (also known as the alpha DNA polymerase-primase complex) consisting of four subunits: the catalytic subunit POLA1, the regulatory subunit POLA2, and the primase complex subunits PRIM1 and PRIM2 respectively. Within the complex, POLA1 directly interacts with PRIM2. The cofactor is Mg(2+). Mn(2+) is required as a cofactor.

The enzyme catalyses ssDNA + n NTP = ssDNA/pppN(pN)n-1 hybrid + (n-1) diphosphate.. The presence of the regulatory subunit PRIM2/p58 accelerates the kinetics of initiation and primer extension. Functionally, catalytic subunit of the DNA primase complex and component of the DNA polymerase alpha complex (also known as the alpha DNA polymerase-primase complex) which play an essential role in the initiation of DNA synthesis. During the S phase of the cell cycle, the DNA polymerase alpha complex (composed of a catalytic subunit POLA1, an accessory subunit POLA2 and two primase subunits, the catalytic subunit PRIM1 and the regulatory subunit PRIM2) is recruited to DNA at the replicative forks via direct interactions with MCM10 and WDHD1. The primase subunit of the polymerase alpha complex initiates DNA synthesis by oligomerising short RNA primers on both leading and lagging strands. These primers are initially extended by the polymerase alpha catalytic subunit and subsequently transferred to polymerase delta and polymerase epsilon for processive synthesis on the lagging and leading strand, respectively. In the primase complex, both subunits are necessary for the initial di-nucleotide formation, but the extension of the primer depends only on the catalytic subunit. Can add both ribo- and deoxynucleotides during elongation of the primers. Synthesizes 9-mer RNA primers (also known as the 'unit length' RNA primers). Incorporates only ribonucleotides in the presence of ribo- and deoxy-nucleotide triphosphates (rNTPs, dNTPs). Requires template thymine or cytidine to start the RNA primer synthesis, with an adenine or guanine at its 5'-end. Binds single stranded DNA. This Mus musculus (Mouse) protein is DNA primase small subunit (Prim1).